The chain runs to 71 residues: Phosphatidylinositol N-acetylglucosaminyltransferase subunit Y (71 aa).

The Cytoplasmic segment spans residues 1–3; it reads MFL. The helical transmembrane segment at 4–26 threads the bilayer; it reads SLPMLTVLIPLVSLAGLFYSASV. Residues 27 to 44 are Lumenal-facing; the sequence is EDDFPQGCTSTTSLCFYS. Residues 45–65 traverse the membrane as a helical segment; that stretch reads LLLPITIPVYVFFHLWTWMGI. Over 66–71 the chain is Cytoplasmic; that stretch reads KLFRHN.

Component of the glycosylphosphatidylinositol-N-acetylglucosaminyltransferase (GPI-GnT) complex composed at least by PIGA, PIGC, PIGH, PIGP, PIGQ, PIGY and DPM2. Interacts directly with PIGA; this interaction regulates glycosylphosphatidylinositol-N-acetylglucosaminyltransferase activity. Does not interact with Ras proteins.

The protein resides in the endoplasmic reticulum membrane. It functions in the pathway glycolipid biosynthesis; glycosylphosphatidylinositol-anchor biosynthesis. Functionally, part of the glycosylphosphatidylinositol-N-acetylglucosaminyltransferase (GPI-GnT) complex that catalyzes the transfer of N-acetylglucosamine from UDP-N-acetylglucosamine to phosphatidylinositol and participates in the first step of GPI biosynthesis. May act by regulating the catalytic subunit PIGA. The sequence is that of Phosphatidylinositol N-acetylglucosaminyltransferase subunit Y from Bos taurus (Bovine).